The primary structure comprises 954 residues: MTQNLQMADRFDSSAVEQALYKHWEEQGYFKPTENPSLPSYCIAIPPPNVTGSLHMGHAFQQTLMDTLIRFNRMEGNNTLWQTGTDHAGIATQMVVERKIAAEEGKTRHDYGREAFINKIWDWKAYSGGTISQQMRRLGNSIDWDRERFTMDEGLSNAVKEVFVRLHEEGLIYRGKRLVNWDPKLHTAISDLEVENKESKGSLWHFRYPLANGAKTADGKDYLVVATTRPETVLGDTAVAVHPEDERYQSLIGKTVVLPLANREIPIVADEYVDREFGTGVVKITPAHDFNDYEVGKRHGLPMVNVMTMNADIRAEAEIIGTDGKPLTTYEAKIPADYQGLERFAARKKVVADFEALGLLDEIKPHDLKVPYGDRGGVPIEPMLTDQWYVSVKPLAEVATKAVEDGEIQFVPKQYENLYFSWMRDIQDWCISRQLWWGHRIPAWYDEAGNVYVARSEEEVRQKHNLPADLALRQDEDVLDTWFSSGLWTFSTLGWPEQTKELKMFHPTDVLITGFDIIFFWVARMIMFTMHFVKDENGKPQVPFKTVYVTGLIRDEQGQKMSKSKGNVLDPIDMIDGISLEDLLEKRTGNMMQPQLAEKIAKATRKEFENGIAAHGTDALRFTLAALASNGRDINWDMKRLEGYRNFCNKLWNASRFVLTNDKLDLSAGEVEYSLADRWIESKFNRTVGEFREALSQYRFDLAANAIYDFTWNEFCDWYLELTKPVFANGTEAQKRGASQTLVRVLEKLLRLAHPIMPFITEEIWQKVKGFAGIDADTIMLQPFPKVVKSELDESAEMQIGWIKELIIAVRNIRAESNIAPSKGLEFLVRNVSDEQRKILAENDRLLKAMAKLDSVQVLSADENAPLSVAKLVGNVEVLIPMAGFINKEAELARLTKEIEKMRGEITRIENKLGNEAFVAKAPEAVIAKEREKMQEYQNGLEKLQTQYQAIENL.

The 'HIGH' region signature appears at P48–H58. The short motif at K560–S564 is the 'KMSKS' region element. An ATP-binding site is contributed by K563. Residues A883 to L954 are a coiled coil.

Belongs to the class-I aminoacyl-tRNA synthetase family. ValS type 1 subfamily. As to quaternary structure, monomer.

The protein resides in the cytoplasm. It carries out the reaction tRNA(Val) + L-valine + ATP = L-valyl-tRNA(Val) + AMP + diphosphate. Functionally, catalyzes the attachment of valine to tRNA(Val). As ValRS can inadvertently accommodate and process structurally similar amino acids such as threonine, to avoid such errors, it has a 'posttransfer' editing activity that hydrolyzes mischarged Thr-tRNA(Val) in a tRNA-dependent manner. This chain is Valine--tRNA ligase, found in Actinobacillus pleuropneumoniae serotype 5b (strain L20).